A 274-amino-acid chain; its full sequence is Orotidine 5'-phosphate decarboxylase (274 aa).

The Proton donor role is filled by Lys-95.

This sequence belongs to the OMP decarboxylase family. Type 2 subfamily.

It catalyses the reaction orotidine 5'-phosphate + H(+) = UMP + CO2. It functions in the pathway pyrimidine metabolism; UMP biosynthesis via de novo pathway; UMP from orotate: step 2/2. The protein is Orotidine 5'-phosphate decarboxylase of Mycobacterium avium (strain 104).